The primary structure comprises 67 residues: MMSKLGVLLTICLLLFPLTAVSLDGDQPADLPELRAQDFAPERSPWFDPVRRCCSQDCRVCIPCCPY.

An N-terminal signal peptide occupies residues 1-22 (MMSKLGVLLTICLLLFPLTAVS). Positions 23-50 (LDGDQPADLPELRAQDFAPERSPWFDPV) are excised as a propeptide. 3 cysteine pairs are disulfide-bonded: cysteine 53-cysteine 65, cysteine 54-cysteine 61, and cysteine 58-cysteine 64. Position 63 is a 4-hydroxyproline (proline 63).

It belongs to the conotoxin M superfamily. As to expression, expressed by the venom duct.

The protein localises to the secreted. The polypeptide is Conotoxin TsMMSK-B022 (Conus tessulatus (Tessellate cone)).